The chain runs to 348 residues: Anthranilate phosphoribosyltransferase (348 aa).

Residues Gly-81, 84-85, Thr-89, 91-94, 109-117, and Ser-121 contribute to the 5-phospho-alpha-D-ribose 1-diphosphate site; these read GD, NIST, and KHGNRAMSS. Anthranilate is bound at residue Gly-81. Mg(2+) is bound at residue Ser-93. Asn-112 contributes to the anthranilate binding site. An anthranilate-binding site is contributed by Arg-167. Residues Asp-226 and Glu-227 each coordinate Mg(2+).

This sequence belongs to the anthranilate phosphoribosyltransferase family. As to quaternary structure, homodimer. Mg(2+) serves as cofactor.

It catalyses the reaction N-(5-phospho-beta-D-ribosyl)anthranilate + diphosphate = 5-phospho-alpha-D-ribose 1-diphosphate + anthranilate. It participates in amino-acid biosynthesis; L-tryptophan biosynthesis; L-tryptophan from chorismate: step 2/5. Its function is as follows. Catalyzes the transfer of the phosphoribosyl group of 5-phosphorylribose-1-pyrophosphate (PRPP) to anthranilate to yield N-(5'-phosphoribosyl)-anthranilate (PRA). The polypeptide is Anthranilate phosphoribosyltransferase (Thermomicrobium roseum (strain ATCC 27502 / DSM 5159 / P-2)).